Consider the following 202-residue polypeptide: Stress enhanced protein 2, chloroplastic (202 aa).

Residues 1 to 60 (MAMATRAIRYQLPSPRFRAPRCESSEPIKQIQIQQRPRGGDLAENGKIVLQPRLCTLRSY) constitute a chloroplast transit peptide. The next 2 helical transmembrane spans lie at 111–131 (LAMIVFAVTVTEEIVTGNSLF) and 142–162 (AIGAGLAAMGCAAMFAWLTIS).

This sequence belongs to the ELIP/psbS family.

It is found in the plastid. The protein localises to the chloroplast thylakoid membrane. Functionally, may be involved in non-photochemical quenching, a process that maintains the balance between dissipation and utilization of light energy to minimize generation of oxidizing molecules, thereby protecting the plant against photo-oxidative damage. May play a photoprotective role in the thylakoid membrane in response to light stress. In Arabidopsis thaliana (Mouse-ear cress), this protein is Stress enhanced protein 2, chloroplastic.